A 246-amino-acid chain; its full sequence is Protein phosphatase PhpP (246 aa).

In terms of domain architecture, PPM-type phosphatase spans 2 to 240 (EISLLTDVGQ…DNITVALVSM (239 aa)). Residues Asp36, Gly37, Asp192, and Asp231 each contribute to the Mn(2+) site.

Belongs to the PP2C family. The cofactor is Mn(2+).

The protein resides in the cytoplasm. The enzyme catalyses O-phospho-L-seryl-[protein] + H2O = L-seryl-[protein] + phosphate. The catalysed reaction is O-phospho-L-threonyl-[protein] + H2O = L-threonyl-[protein] + phosphate. In terms of biological role, protein phosphatase able to dephosphorylate StkP-P and other phosphorylated protein substrates. PhpP and its cognate protein kinase StkP appear to constitute a functional signaling couple in vivo, PhpP's primary role being probably to control phosphorylation levels of StkP and of its targets. PhpP thus performs an essential control of StkP activity. Also dephosphorylates DivIVA in vivo. The polypeptide is Protein phosphatase PhpP (phpP) (Streptococcus pneumoniae serotype 2 (strain D39 / NCTC 7466)).